The primary structure comprises 161 residues: Heme transporter hrg-6 (161 aa).

4 helical membrane passes run 13–33, 38–58, 75–95, and 115–135; these read IAYT…YIFA, VALA…YFYL, VLFW…ITAI, and WWST…NAFI.

It belongs to the HRG family.

It localises to the membrane. Functionally, heme transporter. The protein is Heme transporter hrg-6 (hrg-6) of Caenorhabditis elegans.